The primary structure comprises 146 residues: Large ribosomal subunit protein bL9 (146 aa).

It belongs to the bacterial ribosomal protein bL9 family.

Its function is as follows. Binds to the 23S rRNA. The protein is Large ribosomal subunit protein bL9 of Deinococcus deserti (strain DSM 17065 / CIP 109153 / LMG 22923 / VCD115).